Consider the following 275-residue polypeptide: 2-dehydro-3-deoxyphosphooctonate aldolase (275 aa).

The protein belongs to the KdsA family.

It localises to the cytoplasm. It carries out the reaction D-arabinose 5-phosphate + phosphoenolpyruvate + H2O = 3-deoxy-alpha-D-manno-2-octulosonate-8-phosphate + phosphate. Its pathway is carbohydrate biosynthesis; 3-deoxy-D-manno-octulosonate biosynthesis; 3-deoxy-D-manno-octulosonate from D-ribulose 5-phosphate: step 2/3. It participates in bacterial outer membrane biogenesis; lipopolysaccharide biosynthesis. The sequence is that of 2-dehydro-3-deoxyphosphooctonate aldolase from Francisella tularensis subsp. mediasiatica (strain FSC147).